The following is a 155-amino-acid chain: Deoxyuridine 5'-triphosphate nucleotidohydrolase (155 aa).

Residues 74 to 76 (RSG), N87, and 91 to 93 (TID) each bind substrate.

It belongs to the dUTPase family. Mg(2+) serves as cofactor.

The catalysed reaction is dUTP + H2O = dUMP + diphosphate + H(+). Its pathway is pyrimidine metabolism; dUMP biosynthesis; dUMP from dCTP (dUTP route): step 2/2. This enzyme is involved in nucleotide metabolism: it produces dUMP, the immediate precursor of thymidine nucleotides and it decreases the intracellular concentration of dUTP so that uracil cannot be incorporated into DNA. The protein is Deoxyuridine 5'-triphosphate nucleotidohydrolase of Dinoroseobacter shibae (strain DSM 16493 / NCIMB 14021 / DFL 12).